Here is an 858-residue protein sequence, read N- to C-terminus: Potassium channel KOR1 (858 aa).

Positions 1–41 (MGRGIGSKRRVEDDDGENMPGRKKKEEEEEEEDDDGEEEYE) are disordered. Residues 1–102 (MGRGIGSKRR…PDNKWYRLWT (102 aa)) lie on the Cytoplasmic side of the membrane. Residues 27-41 (EEEEEEDDDGEEEYE) are compositionally biased toward acidic residues. The helical transmembrane segment at 103–123 (RFILVWAVYSSFFTPLEFGFF) threads the bilayer. Over 124 to 130 (RGLPRNL) the chain is Extracellular. Residues 131-151 (FFLDIAGQIAFLIDIVLRFFV) traverse the membrane as a helical segment. Topologically, residues 152–174 (AYRDPDTYRMVHNPTSIALRYCK) are cytoplasmic. The chain crosses the membrane as a helical span at residues 175–195 (SSFIFDLLGCFPWDAIYKACG). Residues 196–201 (SKEEVR) lie on the Extracellular side of the membrane. The chain crosses the membrane as a helical; Voltage-sensor span at residues 202-222 (YLLWIRLTRAMKVTEFFRSME). The Cytoplasmic segment spans residues 223–236 (KDIRINYLFTRIVK). A helical transmembrane segment spans residues 237 to 257 (LIVVELYCTHTAACIFYYLAT). Residues 258–292 (TLPESMEGYTWIGSLQLGDYSYSHFREIDLTKRYM) are Extracellular-facing. Positions 293 to 312 (TSLYFAIVTMATVGYGDIHA) form an intramembrane region, pore-forming. Residues 313–316 (VNVR) lie on the Extracellular side of the membrane. Residues 317–337 (EMIFIMIYVSFDMILGAYLIG) traverse the membrane as a helical segment. At 338–858 (NMTALIVKGS…GDDGGTEARQ (521 aa)) the chain is on the cytoplasmic side. 419 to 539 (LFKGCSAEFI…RRILSNLSES (121 aa)) contributes to the a nucleoside 3',5'-cyclic phosphate binding site. ANK repeat units lie at residues 559 to 592 (KQEA…DPKN), 596 to 625 (DGRS…DIDL), 629 to 658 (FGNT…KLSL), 660 to 689 (NAGS…DPNA), 693 to 722 (DHRA…SVFA), and 726 to 756 (WGTT…ELSR). One can recognise a KHA domain in the interval 772–858 (RCSVFPHHPW…GDDGGTEARQ (87 aa)).

The protein belongs to the potassium channel family. Plant (TC 1.A.1.4) subfamily.

The protein localises to the membrane. Its function is as follows. Probable outward-rectifying potassium channel. This chain is Potassium channel KOR1, found in Oryza sativa subsp. japonica (Rice).